We begin with the raw amino-acid sequence, 670 residues long: MSRHRIVRTMDYNDEYDGYDDIYGHSVEDEHCISPTDAQQWLYDRARGQQSISAFISKNKDIQEEEADEDEDEDAAFAKARRDSESFQMPQLDEIEQAKLSSCVDEVRSVVGDAVSERRIVETSMKFDYDMQKILDEILNEETNKSAKPAVNKMKAPAAPVLPKTVSKTVPTPPPKISLKEPRRGFEIPSPKVPSSPVVSGRNTPVDISAGDDISRSSATVFKVSKEQAVRNARQLYEKERADQKSHIHMIVIGHVDAGKSTLMGHLLYDTGNVSQRVMHKHEQESKKLGKQSFMYAWVLDETGEERARGITMDVGQSRIETKTKIVTLLDAPGHKDFIPNMISGATQADVALLVVDATRGEFESGFELGGQTREHAILVRSLGVNQLGVVINKLDTVGWSQDRFTEIVTKLKSFLKLAGFKDSDVSFTPCSGLTGENLTKKAQEPALTNWYSGRHLLDVIENFKIPERAIDRPLRMSVSDIYKGTGSGFCISGRVETGVLCLNDKVLVGASREQAQVKSLTMNEFPQTCVFAGDQVSVTLPALDINNVTVGCIISDPQTPIPVTTRFQARIIVFNVKVPITMGFPVLLHHQSLIEPAVVCKLTASIHKSTGEVVKKKPRCLGNNSCALVELETSRPICIERYADFKELGRVMLRVAGVTIAAGMVTKIR.

2 disordered regions span residues 60 to 88 and 164 to 202; these read KDIQ…ESFQ and KTVS…VSGR. Positions 63–75 are enriched in acidic residues; sequence QEEEADEDEDEDA. The segment covering 189 to 200 has biased composition (low complexity); sequence PSPKVPSSPVVS. Residues 245–468 form the tr-type G domain; sequence KSHIHMIVIG…DVIENFKIPE (224 aa). A G1 region spans residues 254–261; that stretch reads GHVDAGKS. A GTP-binding site is contributed by 254–261; that stretch reads GHVDAGKS. The segment at 310–314 is G2; it reads GITMD. The segment at 331–334 is G3; it reads DAPG. GTP is bound by residues 393–396 and 432–434; these read NKLD and SGL. The tract at residues 393-396 is G4; that stretch reads NKLD. Residues 432-434 are G5; sequence SGL.

The protein belongs to the TRAFAC class translation factor GTPase superfamily. Classic translation factor GTPase family. In terms of assembly, component of the Pelota-HBS1L complex, also named Dom34-Hbs1 complex, composed of pelo and HBS1. Expressed in ovaries (at protein level).

It is found in the cytoplasm. The catalysed reaction is GTP + H2O = GDP + phosphate + H(+). GTPase component of the Pelota-HBS1L complex, a complex that recognizes stalled ribosomes and triggers the No-Go Decay (NGD) pathway. The Pelota-HBS1L complex recognizes ribosomes stalled at the 3' end of an mRNA and engages stalled ribosomes by destabilizing mRNA in the mRNA channel. Following ribosome-binding, the Pelota-HBS1L complex promotes recruitment of pix, which drives the disassembly of stalled ribosomes, followed by degradation of damaged mRNAs as part of the NGD pathway. Together with pelo, required for transposon silencing in the ovary and testis. Together with pelo, promotes meiosis and spermatid individualization during spermatogenesis. The sequence is that of Protein HBS1 from Drosophila melanogaster (Fruit fly).